We begin with the raw amino-acid sequence, 540 residues long: uncharacterized protein (540 aa).

A signal peptide spans 1 to 20 (MSVSYRGPRWSSFVHVSQHS).

It belongs to the TP096X family.

This is an uncharacterized protein from Treponema pallidum (strain Nichols).